The chain runs to 244 residues: 7-cyano-7-deazaguanine synthase (244 aa).

Position 17–27 (17–27 (FSGGQDSTTCL)) interacts with ATP. Zn(2+) contacts are provided by Cys205, Cys220, Cys223, and Cys226.

Belongs to the QueC family. Zn(2+) is required as a cofactor.

It catalyses the reaction 7-carboxy-7-deazaguanine + NH4(+) + ATP = 7-cyano-7-deazaguanine + ADP + phosphate + H2O + H(+). The protein operates within purine metabolism; 7-cyano-7-deazaguanine biosynthesis. Functionally, catalyzes the ATP-dependent conversion of 7-carboxy-7-deazaguanine (CDG) to 7-cyano-7-deazaguanine (preQ(0)). This is 7-cyano-7-deazaguanine synthase from Bordetella pertussis (strain Tohama I / ATCC BAA-589 / NCTC 13251).